The chain runs to 591 residues: CTP synthase 1-A (591 aa).

The Glutamine amidotransferase type-1 domain maps to 300–554 (SIALVGKYTK…LASVGRLSQY (255 aa)). Residues Cys399, His526, and Glu528 each act as for GATase activity in the active site.

Belongs to the CTP synthase family.

The catalysed reaction is UTP + L-glutamine + ATP + H2O = CTP + L-glutamate + ADP + phosphate + 2 H(+). It functions in the pathway pyrimidine metabolism; CTP biosynthesis via de novo pathway; CTP from UDP: step 2/2. Its function is as follows. This enzyme is involved in the de novo synthesis of CTP, a precursor of DNA, RNA and phospholipids. Catalyzes the ATP-dependent amination of UTP to CTP with either L-glutamine or ammonia as a source of nitrogen. The polypeptide is CTP synthase 1-A (ctps1-a) (Xenopus laevis (African clawed frog)).